The sequence spans 177 residues: Inorganic pyrophosphatase (177 aa).

Lys31, Arg45, and Tyr57 together coordinate substrate. Mg(2+)-binding residues include Asp67, Asp72, and Asp104. Tyr141 contributes to the substrate binding site.

It belongs to the PPase family. In terms of assembly, homohexamer. The cofactor is Mg(2+).

Its subcellular location is the cytoplasm. The enzyme catalyses diphosphate + H2O = 2 phosphate + H(+). Catalyzes the hydrolysis of inorganic pyrophosphate (PPi) forming two phosphate ions. This is Inorganic pyrophosphatase from Halobacterium salinarum (strain ATCC 700922 / JCM 11081 / NRC-1) (Halobacterium halobium).